Here is a 397-residue protein sequence, read N- to C-terminus: Elongation factor Tu (397 aa).

Residues 10-206 form the tr-type G domain; that stretch reads KPHCNIGTIG…TIDEYVPDPE (197 aa). The tract at residues 19–26 is G1; it reads GHVDHGKT. Residue 19–26 participates in GTP binding; that stretch reads GHVDHGKT. Thr-26 lines the Mg(2+) pocket. Residues 61 to 65 form a G2 region; the sequence is GITIS. The interval 82–85 is G3; sequence DCPG. GTP contacts are provided by residues 82–86 and 137–140; these read DCPGH and NKCD. Positions 137-140 are G4; that stretch reads NKCD. A G5 region spans residues 175-177; the sequence is SAL.

The protein belongs to the TRAFAC class translation factor GTPase superfamily. Classic translation factor GTPase family. EF-Tu/EF-1A subfamily. Monomer.

The protein resides in the cytoplasm. The catalysed reaction is GTP + H2O = GDP + phosphate + H(+). Functionally, GTP hydrolase that promotes the GTP-dependent binding of aminoacyl-tRNA to the A-site of ribosomes during protein biosynthesis. This chain is Elongation factor Tu, found in Lachnospira eligens (strain ATCC 27750 / DSM 3376 / VPI C15-48 / C15-B4) (Eubacterium eligens).